A 230-amino-acid polypeptide reads, in one-letter code: Iron-dependent repressor IdeR (230 aa).

Residues leucine 4 to threonine 65 enclose the HTH dtxR-type domain.

The protein belongs to the DtxR/MntR family. As to quaternary structure, homodimer.

Its subcellular location is the cytoplasm. Metal-dependent DNA-binding protein that controls transcription of many genes involved in iron metabolism. This chain is Iron-dependent repressor IdeR (ideR), found in Mycobacterium bovis (strain ATCC BAA-935 / AF2122/97).